The chain runs to 344 residues: Arginine N-succinyltransferase (344 aa).

Leucine 125 is a succinyl-CoA binding site. Histidine 229 acts as the Proton donor in catalysis.

The protein belongs to the arginine N-succinyltransferase family.

It catalyses the reaction succinyl-CoA + L-arginine = N(2)-succinyl-L-arginine + CoA + H(+). Its pathway is amino-acid degradation; L-arginine degradation via AST pathway; L-glutamate and succinate from L-arginine: step 1/5. Its function is as follows. Catalyzes the transfer of succinyl-CoA to arginine to produce N(2)-succinylarginine. This chain is Arginine N-succinyltransferase, found in Enterobacter sp. (strain 638).